We begin with the raw amino-acid sequence, 1358 residues long: Nonribosomal peptide synthetase rstn8 (1358 aa).

The tract at residues 1-23 is disordered; sequence MSHSSHYSPVDSGMVPSSSSTED. The tract at residues 261-659 is adenylation; the sequence is YRELDRLSSR…LGEVEYRLHQ (399 aa). In terms of domain architecture, Carrier spans 795-872; the sequence is ETVSPAESTL…DQASLVRPLV (78 aa). Serine 832 carries the post-translational modification O-(pantetheine 4'-phosphoryl)serine. Residues 909 to 1322 are condensation; the sequence is EDIYPCTPLQ…DDYSQALHEL (414 aa).

The protein belongs to the NRP synthetase family. The cofactor is pantetheine 4'-phosphate.

The enzyme catalyses restrictinol + glycine + H(+) = restricticin + H2O. It participates in antifungal biosynthesis. In terms of biological role, nonribosomal peptide synthetase; part of the gene cluster that mediates the biosynthesis of the tetrahydropyranyl antifungal agent restricticin that acts as an inhibitor of CYP51 and blocks the ergosterol biosynthesis. Within the pathway, rstn8 catalyzes the C3 esterification of restrictinol with glycine to yield restricticin. Rstn8 represents an example of the emerging class of single-module NRPS-like enzymes that perform esterification reactions. Rstn8 displays strict substrate specificity toward glycine as no other natural amino acid is accepted. Rstn8 does not recognize desmethylrestrictinol as a substrate, demonstrating that rstn1-catalyzed methylation, possibly protecting the C4-OH, must precede the final esterification step. The highly reducing polyketide synthase rstn3, the short chain dehydrogenase rstn4, the cyclase rstn5, the FAD-dependent monooxygenase rstn6 and the enoylreductase rstn7 are required to generate the first stable intermediate desmethylrestrictinol. Rstn3 with rstn7 biosynthesize the first polyketide chain intermediate that is reduced by rstn4, followed by epoxidation by rstn6 before 6-endo cyclization via epoxide opening by rstn5 leads to desmethylrestrictinol. The methyltransferase rstn1 then catalyzes the C4 O-methylation of desmethylrestrictinol to produce restrictinol, and the nonribosomal peptide synthetase rstn8 catalyzes the C3 esterification of restrictinol with glycine that leads to restricticin. The protein is Nonribosomal peptide synthetase rstn8 of Aspergillus nomiae NRRL (strain ATCC 15546 / NRRL 13137 / CBS 260.88 / M93).